The sequence spans 439 residues: GTPase Der (439 aa).

2 consecutive EngA-type G domains span residues 2–168 (ATVL…EEKG) and 181–357 (IKIA…SSYT). Residues 8-15 (GKPNVGKS), 55-59 (DTCGV), 118-121 (NKTE), 187-194 (GRPNVGKS), 234-238 (DTAGL), and 300-303 (NKWD) contribute to the GTP site. Residues 358–439 (TKVPSSALNS…PIFLKFKKSR (82 aa)) form the KH-like domain.

The protein belongs to the TRAFAC class TrmE-Era-EngA-EngB-Septin-like GTPase superfamily. EngA (Der) GTPase family. As to quaternary structure, associates with the 50S ribosomal subunit.

GTPase that plays an essential role in the late steps of ribosome biogenesis. The chain is GTPase Der from Thermotoga neapolitana (strain ATCC 49049 / DSM 4359 / NBRC 107923 / NS-E).